The following is a 321-amino-acid chain: Beta-lactamase (321 aa).

The first 30 residues, Met-1–Ser-30, serve as a signal peptide directing secretion. The Acyl-ester intermediate role is filled by Ser-83. Substrate is bound at residue Lys-233 to Gly-235.

It belongs to the class-A beta-lactamase family.

The enzyme catalyses a beta-lactam + H2O = a substituted beta-amino acid. Its activity is regulated as follows. Inhibited by clavulanic acid. In terms of biological role, can hydrolyze cephalosporins, penicillins and also cefoxitin; but at a slow rate. The protein is Beta-lactamase (cfxA) of Phocaeicola vulgatus (Bacteroides vulgatus).